Consider the following 452-residue polypeptide: Bifunctional purine biosynthesis protein PurH (452 aa).

Positions 1–115 (MKRILVSLYE…KNWKKVKPAF (115 aa)) constitute an MGS-like domain.

Belongs to the PurH family.

The catalysed reaction is (6R)-10-formyltetrahydrofolate + 5-amino-1-(5-phospho-beta-D-ribosyl)imidazole-4-carboxamide = 5-formamido-1-(5-phospho-D-ribosyl)imidazole-4-carboxamide + (6S)-5,6,7,8-tetrahydrofolate. It catalyses the reaction IMP + H2O = 5-formamido-1-(5-phospho-D-ribosyl)imidazole-4-carboxamide. The protein operates within purine metabolism; IMP biosynthesis via de novo pathway; 5-formamido-1-(5-phospho-D-ribosyl)imidazole-4-carboxamide from 5-amino-1-(5-phospho-D-ribosyl)imidazole-4-carboxamide (10-formyl THF route): step 1/1. It functions in the pathway purine metabolism; IMP biosynthesis via de novo pathway; IMP from 5-formamido-1-(5-phospho-D-ribosyl)imidazole-4-carboxamide: step 1/1. This chain is Bifunctional purine biosynthesis protein PurH, found in Thermotoga maritima (strain ATCC 43589 / DSM 3109 / JCM 10099 / NBRC 100826 / MSB8).